We begin with the raw amino-acid sequence, 465 residues long: UDP-N-acetylmuramate--L-alanine ligase (465 aa).

An ATP-binding site is contributed by 115-121 (GAHGKTT).

It belongs to the MurCDEF family.

The protein resides in the cytoplasm. It carries out the reaction UDP-N-acetyl-alpha-D-muramate + L-alanine + ATP = UDP-N-acetyl-alpha-D-muramoyl-L-alanine + ADP + phosphate + H(+). The protein operates within cell wall biogenesis; peptidoglycan biosynthesis. Cell wall formation. The chain is UDP-N-acetylmuramate--L-alanine ligase from Coxiella burnetii (strain Dugway 5J108-111).